The chain runs to 151 residues: Large ribosomal subunit protein bL9 (151 aa).

Belongs to the bacterial ribosomal protein bL9 family.

In terms of biological role, binds to the 23S rRNA. In Mycoplasmopsis agalactiae (strain NCTC 10123 / CIP 59.7 / PG2) (Mycoplasma agalactiae), this protein is Large ribosomal subunit protein bL9.